The following is a 448-amino-acid chain: Divalent metal cation transporter MntH (448 aa).

Helical transmembrane passes span 41–61 (LFAF…PGNW), 69–89 (SEFG…AVLL), 117–137 (GFVL…AEVI), 147–167 (FGIP…LVLF), 176–196 (IEVI…AEMV), 215–235 (IVTN…TVMP), 270–290 (FSLT…AAAF), 307–327 (LLNP…ALLA), 363–383 (VLAI…GINE), 384–404 (LLIF…IPLV), and 424–444 (IISW…LFYT).

It belongs to the NRAMP family.

Its subcellular location is the cell membrane. Its function is as follows. H(+)-stimulated, divalent metal cation uptake system. The protein is Divalent metal cation transporter MntH of Listeria welshimeri serovar 6b (strain ATCC 35897 / DSM 20650 / CCUG 15529 / CIP 8149 / NCTC 11857 / SLCC 5334 / V8).